The primary structure comprises 95 residues: Protein J1 homolog (95 aa).

Belongs to the chordopoxvirinae J1 family. As to quaternary structure, homodimer. Part of a complex composed of A30, G7, F10 kinase, A15, D2, D3, and J1. Interacts with A45.

It is found in the virion. It localises to the host cytoplasm. In terms of biological role, late protein which is a part of a large complex required for early virion morphogenesis. This complex participates in the formation of virosomes and the incorporation of virosomal contents into nascent immature virions. J1 protein is required for DNA packaging during immature virions (IV) formation. The chain is Protein J1 homolog from Sus scrofa (Pig).